A 227-amino-acid polypeptide reads, in one-letter code: Uracil phosphoribosyltransferase (227 aa).

Residue 36–40 coordinates GTP; it reads KGLVK. 5-phospho-alpha-D-ribose 1-diphosphate is bound by residues Arg-86, Arg-111, and 145–153; that span reads DPMLATGST. Residues Ile-212 and 217-219 each bind uracil; that span reads GDA. Position 218 (Asp-218) interacts with 5-phospho-alpha-D-ribose 1-diphosphate.

It belongs to the UPRTase family. The cofactor is Mg(2+).

The catalysed reaction is UMP + diphosphate = 5-phospho-alpha-D-ribose 1-diphosphate + uracil. It functions in the pathway pyrimidine metabolism; UMP biosynthesis via salvage pathway; UMP from uracil: step 1/1. Allosterically activated by GTP. In terms of biological role, catalyzes the conversion of uracil and 5-phospho-alpha-D-ribose 1-diphosphate (PRPP) to UMP and diphosphate. This is Uracil phosphoribosyltransferase from Halobacterium salinarum (strain ATCC 700922 / JCM 11081 / NRC-1) (Halobacterium halobium).